Reading from the N-terminus, the 443-residue chain is Trigger factor (443 aa).

Positions 163–248 (GDTAVIDFEG…INEIKAKELP (86 aa)) constitute a PPIase FKBP-type domain.

Belongs to the FKBP-type PPIase family. Tig subfamily.

It localises to the cytoplasm. It catalyses the reaction [protein]-peptidylproline (omega=180) = [protein]-peptidylproline (omega=0). Functionally, involved in protein export. Acts as a chaperone by maintaining the newly synthesized protein in an open conformation. Functions as a peptidyl-prolyl cis-trans isomerase. This is Trigger factor from Agathobacter rectalis (strain ATCC 33656 / DSM 3377 / JCM 17463 / KCTC 5835 / VPI 0990) (Eubacterium rectale).